A 438-amino-acid chain; its full sequence is GTPase Der (438 aa).

2 EngA-type G domains span residues 4–168 (PVVA…PAGA) and 176–351 (VRIA…GEYR). GTP-binding positions include 10 to 17 (GRPNVGKS), 57 to 61 (DTGGI), 120 to 123 (NKVD), 182 to 189 (GRPNVGKS), 229 to 233 (DTAGM), and 294 to 297 (NKWD). The KH-like domain maps to 352 to 436 (RQIPTSMLNR…PVRILFRRRE (85 aa)).

Belongs to the TRAFAC class TrmE-Era-EngA-EngB-Septin-like GTPase superfamily. EngA (Der) GTPase family. Associates with the 50S ribosomal subunit.

GTPase that plays an essential role in the late steps of ribosome biogenesis. This chain is GTPase Der, found in Desulforudis audaxviator (strain MP104C).